Reading from the N-terminus, the 619-residue chain is Chaperone protein HscA homolog (619 aa).

The protein belongs to the heat shock protein 70 family.

In terms of biological role, chaperone involved in the maturation of iron-sulfur cluster-containing proteins. Has a low intrinsic ATPase activity which is markedly stimulated by HscB. This Shewanella amazonensis (strain ATCC BAA-1098 / SB2B) protein is Chaperone protein HscA homolog.